The sequence spans 470 residues: ATP synthase subunit beta (470 aa).

158-165 (GGAGVGKT) is an ATP binding site.

Belongs to the ATPase alpha/beta chains family. As to quaternary structure, F-type ATPases have 2 components, CF(1) - the catalytic core - and CF(0) - the membrane proton channel. CF(1) has five subunits: alpha(3), beta(3), gamma(1), delta(1), epsilon(1). CF(0) has three main subunits: a(1), b(2) and c(9-12). The alpha and beta chains form an alternating ring which encloses part of the gamma chain. CF(1) is attached to CF(0) by a central stalk formed by the gamma and epsilon chains, while a peripheral stalk is formed by the delta and b chains.

Its subcellular location is the cell membrane. The enzyme catalyses ATP + H2O + 4 H(+)(in) = ADP + phosphate + 5 H(+)(out). Produces ATP from ADP in the presence of a proton gradient across the membrane. The catalytic sites are hosted primarily by the beta subunits. This chain is ATP synthase subunit beta, found in Alkalihalophilus pseudofirmus (strain ATCC BAA-2126 / JCM 17055 / OF4) (Bacillus pseudofirmus).